The following is a 312-amino-acid chain: Olfactory receptor 51A7 (312 aa).

Over 1–25 (MSVLNNSEVKLFLLIGIPGLEHAHI) the chain is Extracellular. The N-linked (GlcNAc...) asparagine glycan is linked to asparagine 5. The helical transmembrane segment at 26–46 (WFSIPICLMYLLAIMGNCTIL) threads the bilayer. The Cytoplasmic portion of the chain corresponds to 47–54 (FIIKTEPS). Residues 55-75 (LHEPMYYFLAMLAVSDMGLSL) form a helical membrane-spanning segment. At 76–99 (SSLPTMLRVFLFNAMGISPNACFA) the chain is on the extracellular side. Cysteines 97 and 189 form a disulfide. Residues 100–120 (QEFFIHGFTVMESSVLLIMSL) form a helical membrane-spanning segment. Residues 121 to 139 (DRFLAIHNPLRYSSILTSN) lie on the Cytoplasmic side of the membrane. Residues 140-160 (RVAKMGLILAIRSILLVIPFP) traverse the membrane as a helical segment. Topologically, residues 161 to 196 (FTLRRLKYCQKNLLSHSYCLHQDTMKLACSDNKTNV) are extracellular. Asparagine 192 is a glycosylation site (N-linked (GlcNAc...) asparagine). A helical membrane pass occupies residues 197-216 (IYGFFIALCTMLDLALIVLS). The Cytoplasmic portion of the chain corresponds to 217 to 236 (YVLILKTILSIASLAERLKA). The helical transmembrane segment at 237–257 (LNTCVSHICAVLTFYVPIITL) threads the bilayer. Residues 258 to 272 (AAMHHFAKHKSPLVV) are Extracellular-facing. The helical transmembrane segment at 273–293 (ILIADMFLLVPPLMNPIVYCV) threads the bilayer. Over 294–312 (KTRQIWEKILGKLLNVCGR) the chain is Cytoplasmic.

Belongs to the G-protein coupled receptor 1 family.

The protein resides in the cell membrane. Its function is as follows. Odorant receptor. The sequence is that of Olfactory receptor 51A7 (OR51A7) from Homo sapiens (Human).